The chain runs to 338 residues: Phenylalanine--tRNA ligase alpha subunit (338 aa).

Glu-252 lines the Mg(2+) pocket.

Belongs to the class-II aminoacyl-tRNA synthetase family. Phe-tRNA synthetase alpha subunit type 1 subfamily. As to quaternary structure, tetramer of two alpha and two beta subunits. Requires Mg(2+) as cofactor.

The protein localises to the cytoplasm. The enzyme catalyses tRNA(Phe) + L-phenylalanine + ATP = L-phenylalanyl-tRNA(Phe) + AMP + diphosphate + H(+). In Pseudomonas aeruginosa (strain ATCC 15692 / DSM 22644 / CIP 104116 / JCM 14847 / LMG 12228 / 1C / PRS 101 / PAO1), this protein is Phenylalanine--tRNA ligase alpha subunit.